The primary structure comprises 190 residues: RRP15-like protein (190 aa).

A compositionally biased stretch (basic and acidic residues) spans 1–11; sequence MSTKNRDRLVV. 2 disordered regions span residues 1 to 69 and 119 to 190; these read MSTK…TRKE and QKTM…SDED. The segment covering 55–66 has biased composition (basic residues); the sequence is QRKKKKVIKKLT. A coiled-coil region spans residues 59-84; the sequence is KKVIKKLTRKEQSLKHSVKEYRIKLA. Residues 119–153 are compositionally biased toward basic and acidic residues; it reads QKTMSDAVKEKMTARDRKEARERFDGKNFDSDKFA. Positions 167 to 190 are enriched in acidic residues; it reads GEEEDEQMNIGDDEIDAGNYSDED.

This sequence belongs to the RRP15 family.

The sequence is that of RRP15-like protein from Caenorhabditis briggsae.